The sequence spans 233 residues: Small ribosomal subunit protein uS2 (233 aa).

Belongs to the universal ribosomal protein uS2 family.

The polypeptide is Small ribosomal subunit protein uS2 (Prochlorococcus marinus (strain MIT 9312)).